The primary structure comprises 378 residues: Palmitoyltransferase PFA4 (378 aa).

Residues 1–9 (MPVKLRWPW) are Cytoplasmic-facing. Residues 10–30 (LGIAIPTFLISFIGYGAHYFI) form a helical membrane-spanning segment. The Lumenal segment spans residues 31-40 (LSNFLSVPKQ). The helical transmembrane segment at 41–61 (ITFEFCLSMIWLSYYLAICTN) threads the bilayer. Residues 62–119 (PGRPLPNYKPPPDIWRNFCKKCQSYKPERSHHCKTCNQCVLMMDHHCPWTMNCVGFAN) are Cytoplasmic-facing. Residues 78-128 (NFCKKCQSYKPERSHHCKTCNQCVLMMDHHCPWTMNCVGFANYPHFLRFLF) enclose the DHHC domain. The S-palmitoyl cysteine intermediate role is filled by Cys108. A helical membrane pass occupies residues 120–140 (YPHFLRFLFWIIVTTSVLFCI). Topologically, residues 141–164 (QAKRIYFIWQQRHLPGYFFKKSEL) are lumenal. A helical membrane pass occupies residues 165–185 (IFLTISSPLNSFVLLTITILF). The Cytoplasmic segment spans residues 186–378 (LRCLFNQILN…DDFGVDVDME (193 aa)).

It belongs to the DHHC palmitoyltransferase family. PFA4 subfamily. Autopalmitoylated.

It localises to the endoplasmic reticulum membrane. The enzyme catalyses L-cysteinyl-[protein] + hexadecanoyl-CoA = S-hexadecanoyl-L-cysteinyl-[protein] + CoA. Its function is as follows. Mediates the reversible addition of palmitate to target proteins, thereby regulating their membrane association and biological function. Palmitoylates several amino acid permeases. Palmitoylates chitin synthase CHS3, which is required for its proper export from the ER. Can palmitoylate RAS2 in vitro. The sequence is that of Palmitoyltransferase PFA4 from Saccharomyces cerevisiae (strain ATCC 204508 / S288c) (Baker's yeast).